Here is a 261-residue protein sequence, read N- to C-terminus: Phosphatidylglycerol--prolipoprotein diacylglyceryl transferase (261 aa).

The next 4 membrane-spanning stretches (helical) occupy residues 12-32 (ISIR…VYLA), 41-61 (IIPD…IVGA), 87-107 (GIAG…LYFF), and 112-132 (LIHP…AQSI). A 1,2-diacyl-sn-glycero-3-phospho-(1'-sn-glycerol) is bound at residue R134. Helical transmembrane passes span 170–190 (QPTF…IIVL), 200–220 (GEIA…IEGM), and 229–249 (GLRV…GIII).

The protein belongs to the Lgt family.

The protein localises to the cell membrane. It carries out the reaction L-cysteinyl-[prolipoprotein] + a 1,2-diacyl-sn-glycero-3-phospho-(1'-sn-glycerol) = an S-1,2-diacyl-sn-glyceryl-L-cysteinyl-[prolipoprotein] + sn-glycerol 1-phosphate + H(+). Its pathway is protein modification; lipoprotein biosynthesis (diacylglyceryl transfer). Functionally, catalyzes the transfer of the diacylglyceryl group from phosphatidylglycerol to the sulfhydryl group of the N-terminal cysteine of a prolipoprotein, the first step in the formation of mature lipoproteins. This is Phosphatidylglycerol--prolipoprotein diacylglyceryl transferase from Streptococcus sanguinis (strain SK36).